Reading from the N-terminus, the 118-residue chain is Small ribosomal subunit protein uS13 (118 aa).

The disordered stretch occupies residues 91–118 (HRRSLPVRGQRTKTNARTRKGPRKPIKA).

It belongs to the universal ribosomal protein uS13 family. As to quaternary structure, part of the 30S ribosomal subunit. Forms a loose heterodimer with protein S19. Forms two bridges to the 50S subunit in the 70S ribosome.

Located at the top of the head of the 30S subunit, it contacts several helices of the 16S rRNA. In the 70S ribosome it contacts the 23S rRNA (bridge B1a) and protein L5 of the 50S subunit (bridge B1b), connecting the 2 subunits; these bridges are implicated in subunit movement. Contacts the tRNAs in the A and P-sites. The chain is Small ribosomal subunit protein uS13 from Francisella philomiragia subsp. philomiragia (strain ATCC 25017 / CCUG 19701 / FSC 153 / O#319-036).